A 179-amino-acid polypeptide reads, in one-letter code: Peptidyl-tRNA hydrolase (179 aa).

Y15 provides a ligand contact to tRNA. Catalysis depends on H20, which acts as the Proton acceptor. TRNA-binding residues include Y66, N68, and N114.

The protein belongs to the PTH family. As to quaternary structure, monomer.

It localises to the cytoplasm. It catalyses the reaction an N-acyl-L-alpha-aminoacyl-tRNA + H2O = an N-acyl-L-amino acid + a tRNA + H(+). Hydrolyzes ribosome-free peptidyl-tRNAs (with 1 or more amino acids incorporated), which drop off the ribosome during protein synthesis, or as a result of ribosome stalling. In terms of biological role, catalyzes the release of premature peptidyl moieties from peptidyl-tRNA molecules trapped in stalled 50S ribosomal subunits, and thus maintains levels of free tRNAs and 50S ribosomes. The chain is Peptidyl-tRNA hydrolase from Chlamydia muridarum (strain MoPn / Nigg).